Consider the following 89-residue polypeptide: UPF0335 protein Nham_1221 (89 aa).

The protein belongs to the UPF0335 family.

The sequence is that of UPF0335 protein Nham_1221 from Nitrobacter hamburgensis (strain DSM 10229 / NCIMB 13809 / X14).